We begin with the raw amino-acid sequence, 299 residues long: MDNIVYDFAKITFQAKDNRSPTTNSNLSWQLNQMALSDMEEMQDTSEPIAPPESDDNVSSESHDSDDVDSQLSRCEDNDDDSDCISGSSRRSSTFGARAGVARRRMPARVSKDNFNRICSAIMKPIKKKQRKELNTNAQTLKSIEKIYTSRRMKKFTPTNLETIFEEPSDENAADAEDDSEECSISSQVKVVKVWGRKLRRAISFSDGLNKNKILSKRRRQKVKKTFGKRFALKKISMTEFHDRLNKSFDSAMLEGDDAEAGGSAEAVNIPKTSMTMEDIQLPTMSSQHQFLMQPAGFE.

The disordered stretch occupies residues 16 to 100; it reads KDNRSPTTNS…RSSTFGARAG (85 aa). Residues 20 to 35 show a composition bias toward polar residues; sequence SPTTNSNLSWQLNQMA. The segment covering 53 to 69 has biased composition (acidic residues); the sequence is ESDDNVSSESHDSDDVD. The span at 84–93 shows a compositional bias: low complexity; sequence CISGSSRRSS. Phosphoserine occurs at positions 204 and 264.

As to quaternary structure, binds to DNA in vitro. Interacts directly with Asx. In terms of tissue distribution, ubiquitously expressed in precellularized embryos. Then it decreases at cellular blastoderm to increase again during germ band extension. During germ band extension, it is highly expressed in somatic and visceral mesoderm. Ubiquitously expressed in imaginal disks. In ovary, it is expressed from stage 10.

It localises to the nucleus. It is found in the cytoplasm. The protein localises to the chromosome. Functionally, potential cofactor involved in sensory organ development. Despite its interaction with the Polycomb group protein Asx, it does not regulate the expression of homeotic genes. The sequence is that of Protein tantalus from Drosophila melanogaster (Fruit fly).